The chain runs to 510 residues: Maturase K (510 aa).

This sequence belongs to the intron maturase 2 family. MatK subfamily.

It is found in the plastid. It localises to the chloroplast. Functionally, usually encoded in the trnK tRNA gene intron. Probably assists in splicing its own and other chloroplast group II introns. In Anomochloa marantoidea (Herbaceous bamboo), this protein is Maturase K.